The chain runs to 566 residues: Proline--tRNA ligase (566 aa).

It belongs to the class-II aminoacyl-tRNA synthetase family. ProS type 1 subfamily. Homodimer.

It localises to the cytoplasm. The enzyme catalyses tRNA(Pro) + L-proline + ATP = L-prolyl-tRNA(Pro) + AMP + diphosphate. Its function is as follows. Catalyzes the attachment of proline to tRNA(Pro) in a two-step reaction: proline is first activated by ATP to form Pro-AMP and then transferred to the acceptor end of tRNA(Pro). As ProRS can inadvertently accommodate and process non-cognate amino acids such as alanine and cysteine, to avoid such errors it has two additional distinct editing activities against alanine. One activity is designated as 'pretransfer' editing and involves the tRNA(Pro)-independent hydrolysis of activated Ala-AMP. The other activity is designated 'posttransfer' editing and involves deacylation of mischarged Ala-tRNA(Pro). The misacylated Cys-tRNA(Pro) is not edited by ProRS. This Bacillus cereus (strain G9842) protein is Proline--tRNA ligase.